The sequence spans 419 residues: Serine hydroxymethyltransferase (419 aa).

Residues Leu121 and 125–127 (GHL) contribute to the (6S)-5,6,7,8-tetrahydrofolate site. Lys230 carries the post-translational modification N6-(pyridoxal phosphate)lysine.

The protein belongs to the SHMT family. As to quaternary structure, homodimer. Pyridoxal 5'-phosphate is required as a cofactor.

It localises to the cytoplasm. It carries out the reaction (6R)-5,10-methylene-5,6,7,8-tetrahydrofolate + glycine + H2O = (6S)-5,6,7,8-tetrahydrofolate + L-serine. The protein operates within one-carbon metabolism; tetrahydrofolate interconversion. It functions in the pathway amino-acid biosynthesis; glycine biosynthesis; glycine from L-serine: step 1/1. Catalyzes the reversible interconversion of serine and glycine with tetrahydrofolate (THF) serving as the one-carbon carrier. This reaction serves as the major source of one-carbon groups required for the biosynthesis of purines, thymidylate, methionine, and other important biomolecules. Also exhibits THF-independent aldolase activity toward beta-hydroxyamino acids, producing glycine and aldehydes, via a retro-aldol mechanism. The polypeptide is Serine hydroxymethyltransferase (Vesicomyosocius okutanii subsp. Calyptogena okutanii (strain HA)).